Here is a 607-residue protein sequence, read N- to C-terminus: UvrABC system protein C (607 aa).

One can recognise a GIY-YIG domain in the interval 16–94 (HLPGVYRHLD…IKSLRPRYNI (79 aa)). Positions 203 to 238 (REVMDEIEARMQQASGELRFEEAAVLRDQMGSLSKV) constitute a UVR domain.

This sequence belongs to the UvrC family. In terms of assembly, interacts with UvrB in an incision complex.

Its subcellular location is the cytoplasm. Its function is as follows. The UvrABC repair system catalyzes the recognition and processing of DNA lesions. UvrC both incises the 5' and 3' sides of the lesion. The N-terminal half is responsible for the 3' incision and the C-terminal half is responsible for the 5' incision. In Bordetella avium (strain 197N), this protein is UvrABC system protein C.